The chain runs to 481 residues: Aspartyl/glutamyl-tRNA(Asn/Gln) amidotransferase subunit B (481 aa).

The protein belongs to the GatB/GatE family. GatB subfamily. Heterotrimer of A, B and C subunits.

It carries out the reaction L-glutamyl-tRNA(Gln) + L-glutamine + ATP + H2O = L-glutaminyl-tRNA(Gln) + L-glutamate + ADP + phosphate + H(+). The enzyme catalyses L-aspartyl-tRNA(Asn) + L-glutamine + ATP + H2O = L-asparaginyl-tRNA(Asn) + L-glutamate + ADP + phosphate + 2 H(+). Allows the formation of correctly charged Asn-tRNA(Asn) or Gln-tRNA(Gln) through the transamidation of misacylated Asp-tRNA(Asn) or Glu-tRNA(Gln) in organisms which lack either or both of asparaginyl-tRNA or glutaminyl-tRNA synthetases. The reaction takes place in the presence of glutamine and ATP through an activated phospho-Asp-tRNA(Asn) or phospho-Glu-tRNA(Gln). In Pseudomonas paraeruginosa (strain DSM 24068 / PA7) (Pseudomonas aeruginosa (strain PA7)), this protein is Aspartyl/glutamyl-tRNA(Asn/Gln) amidotransferase subunit B.